Reading from the N-terminus, the 217-residue chain is Small ribosomal subunit protein uS3c (217 aa).

In terms of domain architecture, KH type-2 spans 43–117; that stretch reads IKNYVQKNKR…KLNIAITRIA (75 aa).

It belongs to the universal ribosomal protein uS3 family. In terms of assembly, part of the 30S ribosomal subunit.

It is found in the plastid. The protein resides in the chloroplast. This Platanus occidentalis (Sycamore) protein is Small ribosomal subunit protein uS3c (rps3).